The sequence spans 224 residues: UPF0758 protein PSHAa2643 (224 aa).

The MPN domain occupies 102-224; sequence IFNSPNAVYD…CVSFAERGLI (123 aa). Positions 173, 175, and 186 each coordinate Zn(2+). A JAMM motif motif is present at residues 173-186; that stretch reads HNHPSGIAEPSQAD.

Belongs to the UPF0758 family.

The polypeptide is UPF0758 protein PSHAa2643 (Pseudoalteromonas translucida (strain TAC 125)).